The following is a 534-amino-acid chain: Coiled-coil domain-containing protein 183 (534 aa).

3 coiled-coil regions span residues 10–54 (EEQT…NIRR), 136–209 (DASK…DMKI), and 323–396 (LAQR…HSNM).

The polypeptide is Coiled-coil domain-containing protein 183 (CCDC183) (Homo sapiens (Human)).